A 290-amino-acid chain; its full sequence is UPF0761 membrane protein YihY (290 aa).

The next 6 helical transmembrane spans lie at Leu-44 to Phe-64, Val-104 to Leu-124, Phe-140 to Ile-160, Ile-183 to Ile-203, Ala-210 to Leu-230, and Val-244 to Leu-264.

The protein belongs to the UPF0761 family.

It is found in the cell inner membrane. This is UPF0761 membrane protein YihY from Shigella boydii serotype 4 (strain Sb227).